The chain runs to 151 residues: Transcription antitermination protein NusB (151 aa).

It belongs to the NusB family.

In terms of biological role, involved in transcription antitermination. Required for transcription of ribosomal RNA (rRNA) genes. Binds specifically to the boxA antiterminator sequence of the ribosomal RNA (rrn) operons. The polypeptide is Transcription antitermination protein NusB (Thermus thermophilus (strain ATCC BAA-163 / DSM 7039 / HB27)).